The sequence spans 230 residues: Sperm-associated antigen 7 homolog (230 aa).

The segment at methionine 1–lysine 45 is disordered. The span at proline 16–lysine 45 shows a compositional bias: basic and acidic residues. The R3H domain maps to alanine 46 to lysine 109. Basic and acidic residues predominate over residues glutamate 119–leucine 144. Disordered regions lie at residues glutamate 119–histidine 169 and alanine 185–valine 230. Residue serine 158 is modified to Phosphoserine. Residues asparagine 196–arginine 211 are compositionally biased toward basic and acidic residues.

The sequence is that of Sperm-associated antigen 7 homolog (spag7) from Danio rerio (Zebrafish).